A 374-amino-acid polypeptide reads, in one-letter code: Anhydro-N-acetylmuramic acid kinase (374 aa).

Residue 12 to 19 participates in ATP binding; that stretch reads GTSLDGID.

It belongs to the anhydro-N-acetylmuramic acid kinase family.

The enzyme catalyses 1,6-anhydro-N-acetyl-beta-muramate + ATP + H2O = N-acetyl-D-muramate 6-phosphate + ADP + H(+). It participates in amino-sugar metabolism; 1,6-anhydro-N-acetylmuramate degradation. It functions in the pathway cell wall biogenesis; peptidoglycan recycling. Functionally, catalyzes the specific phosphorylation of 1,6-anhydro-N-acetylmuramic acid (anhMurNAc) with the simultaneous cleavage of the 1,6-anhydro ring, generating MurNAc-6-P. Is required for the utilization of anhMurNAc either imported from the medium or derived from its own cell wall murein, and thus plays a role in cell wall recycling. This is Anhydro-N-acetylmuramic acid kinase from Sodalis glossinidius (strain morsitans).